The chain runs to 336 residues: MTEIQKPYDLKGRSLLKESDFTKAEFEGLIDFAITLKEYKKNGIKHHYLSGKNIALLFEKNSTRTRAAFTVASIDLGAHPEFLGKNDIQLGKKESVEDTAKVLGRMFDGIEFRGFSQQAVEDLAKFSGVPVWNGLTDDWHPTQMLADFMTIKENFGYLEGINLTYVGDGRNNIAHSLMVAGAMLGVNVRICTPKSLNPKEAYVDIAKEKASQYGGSVMITDNIAEAVENTDAIYTDVWVSMGEESEFEQRINLLKDYQVNQQMFDLTGKDSTIFLHCLPAFHDTNTLYGQEIYEKYGLAEMEVTDQIFRSEHSKVFDQAENRMHTIKAVMAATLGS.

Residues 62-65 (STRT), glutamine 89, arginine 113, and 140-143 (HPTQ) each bind carbamoyl phosphate. Residues asparagine 172, aspartate 236, and 240–241 (SM) contribute to the L-ornithine site. Residues 277-278 (CL) and arginine 322 contribute to the carbamoyl phosphate site.

Belongs to the aspartate/ornithine carbamoyltransferase superfamily. OTCase family.

The protein resides in the cytoplasm. The catalysed reaction is carbamoyl phosphate + L-ornithine = L-citrulline + phosphate + H(+). It functions in the pathway amino-acid degradation; L-arginine degradation via ADI pathway; carbamoyl phosphate from L-arginine: step 2/2. In terms of biological role, reversibly catalyzes the transfer of the carbamoyl group from carbamoyl phosphate (CP) to the N(epsilon) atom of ornithine (ORN) to produce L-citrulline. This Staphylococcus aureus (strain MSSA476) protein is Ornithine carbamoyltransferase, catabolic.